Reading from the N-terminus, the 414-residue chain is Gamma-glutamyl phosphate reductase (414 aa).

The protein belongs to the gamma-glutamyl phosphate reductase family.

It localises to the cytoplasm. The catalysed reaction is L-glutamate 5-semialdehyde + phosphate + NADP(+) = L-glutamyl 5-phosphate + NADPH + H(+). Its pathway is amino-acid biosynthesis; L-proline biosynthesis; L-glutamate 5-semialdehyde from L-glutamate: step 2/2. Functionally, catalyzes the NADPH-dependent reduction of L-glutamate 5-phosphate into L-glutamate 5-semialdehyde and phosphate. The product spontaneously undergoes cyclization to form 1-pyrroline-5-carboxylate. The sequence is that of Gamma-glutamyl phosphate reductase from Francisella philomiragia subsp. philomiragia (strain ATCC 25017 / CCUG 19701 / FSC 153 / O#319-036).